A 396-amino-acid polypeptide reads, in one-letter code: L-lactate dehydrogenase (396 aa).

In terms of domain architecture, FMN hydroxy acid dehydrogenase spans 1–380 (MIISAASDYR…SGDSLVQELG (380 aa)). Tyrosine 24 provides a ligand contact to substrate. FMN is bound by residues serine 106 and glutamine 127. Tyrosine 129 contacts substrate. Residue threonine 155 participates in FMN binding. Arginine 164 contacts substrate. Residue lysine 251 coordinates FMN. The active-site Proton acceptor is the histidine 275. A substrate-binding site is contributed by arginine 278. 306 to 330 (DSGIRNGLDVVRMIALGADTVLLGR) lines the FMN pocket.

Belongs to the FMN-dependent alpha-hydroxy acid dehydrogenase family. The cofactor is FMN.

The protein localises to the cell inner membrane. It catalyses the reaction (S)-lactate + A = pyruvate + AH2. Catalyzes the conversion of L-lactate to pyruvate. Is coupled to the respiratory chain. In Salmonella paratyphi B (strain ATCC BAA-1250 / SPB7), this protein is L-lactate dehydrogenase.